The following is a 396-amino-acid chain: Putative ribosomal RNA large subunit methyltransferase YwbD (396 aa).

Residues 1 to 79 (MKLLTLKKAH…KHEQIDQAFF (79 aa)) enclose the PUA domain.

It belongs to the methyltransferase superfamily. RlmI family.

It localises to the cytoplasm. In Bacillus subtilis (strain 168), this protein is Putative ribosomal RNA large subunit methyltransferase YwbD (ywbD).